Consider the following 273-residue polypeptide: Putative deoxyribonuclease TATDN1 homolog (273 aa).

A divalent metal cation contacts are provided by Glu91, His125, His147, and Asp195.

This sequence belongs to the metallo-dependent hydrolases superfamily. TatD-type hydrolase family. A divalent metal cation is required as a cofactor.

Its subcellular location is the nucleus. Its function is as follows. Putative deoxyribonuclease. This Encephalitozoon cuniculi (strain GB-M1) (Microsporidian parasite) protein is Putative deoxyribonuclease TATDN1 homolog.